The following is a 214-amino-acid chain: MSEEDKTAASAEQPKRAPKLNERILSSLSRRSVAAHPWHDLEIGPDAPAVFNVVVEITKGSKVKYELDKKTGLIKVDRVLYSSVVYPHNYGFVPRTLCEDNDPMDVLVLMQEPVVPGSFLRARAIGLMPMIDQGEKDDKIIAVCADDPEYRHYNDISELSPHRLQEIKRFFEDYKKNENKEVAVDAFLPATTAREAIQYSMDLYAQYILQSLRQ.

Residues 1 to 20 (MSEEDKTAASAEQPKRAPKL) are disordered. Substrate contacts are provided by Lys-64, Arg-78, and Tyr-90. The Mg(2+) site is built by Asp-100, Asp-105, and Asp-137. Substrate is bound at residue Tyr-174.

It belongs to the PPase family. Mg(2+) is required as a cofactor.

Its subcellular location is the cytoplasm. The catalysed reaction is diphosphate + H2O = 2 phosphate + H(+). This chain is Soluble inorganic pyrophosphatase (IPP), found in Zea mays (Maize).